The following is a 290-amino-acid chain: 33 kDa chaperonin (290 aa).

Cystine bridges form between Cys235-Cys237 and Cys268-Cys271.

The protein belongs to the HSP33 family. Post-translationally, under oxidizing conditions two disulfide bonds are formed involving the reactive cysteines. Under reducing conditions zinc is bound to the reactive cysteines and the protein is inactive.

Its subcellular location is the cytoplasm. Its function is as follows. Redox regulated molecular chaperone. Protects both thermally unfolding and oxidatively damaged proteins from irreversible aggregation. Plays an important role in the bacterial defense system toward oxidative stress. This chain is 33 kDa chaperonin, found in Streptococcus sanguinis (strain SK36).